The sequence spans 386 residues: Succinyl-diaminopimelate desuccinylase (386 aa).

Residue histidine 77 participates in Zn(2+) binding. Aspartate 79 is an active-site residue. Aspartate 110 contacts Zn(2+). Glutamate 144 serves as the catalytic Proton acceptor. Glutamate 145, glutamate 173, and histidine 359 together coordinate Zn(2+).

The protein belongs to the peptidase M20A family. DapE subfamily. In terms of assembly, homodimer. Zn(2+) is required as a cofactor. It depends on Co(2+) as a cofactor.

It catalyses the reaction N-succinyl-(2S,6S)-2,6-diaminopimelate + H2O = (2S,6S)-2,6-diaminopimelate + succinate. It participates in amino-acid biosynthesis; L-lysine biosynthesis via DAP pathway; LL-2,6-diaminopimelate from (S)-tetrahydrodipicolinate (succinylase route): step 3/3. In terms of biological role, catalyzes the hydrolysis of N-succinyl-L,L-diaminopimelic acid (SDAP), forming succinate and LL-2,6-diaminopimelate (DAP), an intermediate involved in the bacterial biosynthesis of lysine and meso-diaminopimelic acid, an essential component of bacterial cell walls. The sequence is that of Succinyl-diaminopimelate desuccinylase from Ralstonia pickettii (strain 12J).